The following is a 147-amino-acid chain: Small ribosomal subunit protein uS5 (147 aa).

The S5 DRBM domain maps to 9–72; it reads FQEVVVNIGR…DDAFKNLIHV (64 aa).

It belongs to the universal ribosomal protein uS5 family. In terms of assembly, part of the 30S ribosomal subunit. Contacts proteins S4 and S8.

Its function is as follows. With S4 and S12 plays an important role in translational accuracy. Functionally, located at the back of the 30S subunit body where it stabilizes the conformation of the head with respect to the body. This is Small ribosomal subunit protein uS5 from Helicobacter pylori (strain J99 / ATCC 700824) (Campylobacter pylori J99).